The primary structure comprises 63 residues: Conotoxin LeDr243 (63 aa).

A signal peptide spans 1-22 (MRCLPVFVILLLLIASTPSIDA). The propeptide occupies 23–47 (RPKTKDDMPLASFNDNAKRILQILS). Residue Cys60 is modified to Cysteine amide. Residues 62–63 (LG) constitute a propeptide that is removed on maturation.

The protein belongs to the conotoxin T superfamily. Post-translationally, contains 2 disulfide bonds that can be either 'C1-C3, C2-C4' or 'C1-C4, C2-C3', since these disulfide connectivities have been observed for conotoxins with cysteine framework V (for examples, see AC P0DQQ7 and AC P81755). As to expression, expressed by the venom duct.

The protein localises to the secreted. This chain is Conotoxin LeDr243, found in Conus litteratus (Lettered cone).